The primary structure comprises 462 residues: MLTIYNTLSKTKEVFKPLDGNKVRMYVCGMTVYDYCHIGHGRSMVAFDLVTRWLRFSGYDLTYVRNITDIDDKIINRANENGESFDALTERMIAAMHEDEARLNILKPDMEPRATDHIPGMHAMIQTLIDKGYAYAPGNGDVYYRVAKFMGYGKLSRKKIEDLRIGARIEVDEAKQDPLDFVLWKGTKPGEPSWESPWGAGRPGWHIECSVMSTCCLGDTFDIHGGGSDLEFPHHENEIAQSEAATGKTYANAWMHCGMIRINGEKMSKSLNNFFTIRDVLEKYHPEVVRYLLVSSHYRSAINYSEDNLKDAKGALERFYHALKGLPSVAPAGGEAFVARFTEVMNDDFGTPEACAVLFEMVREINRLRESDLDAAAGLAARLKELASVLGVLQMKPEDFLQAGAEGRVDAAEVDALIQARLAARANKDWAESDRIRDQLTAMGVVLEDGKGGTTWRLADQA.

Cysteine 28 lines the Zn(2+) pocket. Residues 30–40 (MTVYDYCHIGH) carry the 'HIGH' region motif. 3 residues coordinate Zn(2+): cysteine 209, histidine 234, and glutamate 238. A 'KMSKS' region motif is present at residues 266–270 (KMSKS). ATP is bound at residue lysine 269.

The protein belongs to the class-I aminoacyl-tRNA synthetase family. Monomer. The cofactor is Zn(2+).

The protein resides in the cytoplasm. It catalyses the reaction tRNA(Cys) + L-cysteine + ATP = L-cysteinyl-tRNA(Cys) + AMP + diphosphate. The chain is Cysteine--tRNA ligase from Pseudomonas fluorescens (strain SBW25).